We begin with the raw amino-acid sequence, 220 residues long: Homeobox-leucine zipper protein ATHB-21 (220 aa).

Positions 26–48 (VPQQGGEAKPTRRRKRKSKSVVV) are disordered. The segment at residues 58-117 (GWFRKRKLSDEQVRMLEISFEDDHKLESERKDRLASELGLDPRQVAVWFQNRRARWKNKR) is a DNA-binding region (homeobox). Residues 118–146 (VEDEYTKLKNAYETTVVEKCRLDSEVIHL) are leucine-zipper.

It belongs to the HD-ZIP homeobox family. Class I subfamily. In terms of tissue distribution, widely expressed.

It localises to the nucleus. In terms of biological role, probable transcription factor. In Arabidopsis thaliana (Mouse-ear cress), this protein is Homeobox-leucine zipper protein ATHB-21 (ATHB-21).